Here is a 441-residue protein sequence, read N- to C-terminus: Protein C-ets-1 (441 aa).

2 positions are modified to N6-acetyllysine; alternate: lysine 8 and lysine 15. Glycyl lysine isopeptide (Lys-Gly) (interchain with G-Cter in SUMO2); alternate cross-links involve residues lysine 8 and lysine 15. Phosphothreonine; by MAPK is present on threonine 38. Residues alanine 51–aspartate 136 enclose the PNT domain. Positions glutamate 130–arginine 243 are activation domain; required for transcription activation. Lysine 138 is covalently cross-linked (Glycyl lysine isopeptide (Lys-Gly) (interchain with G-Cter in SUMO2)). Phosphotyrosine is present on tyrosine 223. A Glycyl lysine isopeptide (Lys-Gly) (interchain with G-Cter in SUMO) cross-link involves residue lysine 227. 2 positions are modified to phosphoserine: serine 251 and serine 254. Position 265 is a phosphothreonine (threonine 265). A phosphoserine mark is found at serine 267, serine 270, serine 282, and serine 285. Residues phenylalanine 304–alanine 312 are helix HI-1. The residue at position 305 (lysine 305) is an N6-acetyllysine. The helix HI-2 stretch occupies residues alanine 323–threonine 330. Residues isoleucine 335–valine 415 constitute a DNA-binding region (ETS). Residues leucine 418–leucine 422 are helix H4. The interval proline 426–methionine 432 is helix H5.

Belongs to the ETS family. Binds DNA as a homodimer; homodimerization is required for transcription activation. Interacts with MAF and MAFB. Interacts with PAX5; the interaction alters DNA-binding properties. Interacts with DAXX. Interacts with UBE2I. Interacts with SP100; the interaction is direct and modulates ETS1 transcriptional activity. Post-translationally, sumoylated on Lys-15 and Lys-227, preferentially with SUMO2; which inhibits transcriptional activity. Ubiquitinated; which induces proteasomal degradation. In terms of processing, phosphorylation at Ser-251, Ser-282 and Ser-285 by CaMK2/CaMKII in response to calcium signaling decreases affinity for DNA: an increasing number of phosphoserines causes DNA-binding to become progressively weaker. As to expression, highly expressed within lymphoid cells. Isoforms c-ETS-1A and Ets-1 p27 are both detected in all fetal tissues tested, but vary with tissue type in adult tissues. None is detected in brain or kidney.

Its subcellular location is the nucleus. It is found in the cytoplasm. With respect to regulation, autoinhibited by a module composed of four alpha helices (HI-1, HI-2, H4, and H5) that flank the DNA-binding ETS domain, reducing the affinity for DNA. Phosphorylation by CaMK2/CaMKII in response to calcium signaling decreases affinity for DNA. In terms of biological role, transcription factor. Directly controls the expression of cytokine and chemokine genes in a wide variety of different cellular contexts. May control the differentiation, survival and proliferation of lymphoid cells. May also regulate angiogenesis through regulation of expression of genes controlling endothelial cell migration and invasion. Its function is as follows. Acts as a dominant-negative for isoform c-ETS-1A. The sequence is that of Protein C-ets-1 (ETS1) from Homo sapiens (Human).